Reading from the N-terminus, the 474-residue chain is Vitamin D-binding protein (474 aa).

The signal sequence occupies residues 1–16 (MKRILVFLLAVAFVHA). 3 consecutive Albumin domains span residues 17 to 208 (LERG…QLKH), 209 to 393 (FSLL…QLTR), and 394 to 474 (ELSS…TLQS). Intrachain disulfides connect cysteine 29–cysteine 75 and cysteine 74–cysteine 83. An N-linked (GlcNAc...) asparagine glycan is attached at asparagine 86. 12 disulfide bridges follow: cysteine 96/cysteine 112, cysteine 111/cysteine 122, cysteine 145/cysteine 190, cysteine 189/cysteine 198, cysteine 220/cysteine 266, cysteine 265/cysteine 273, cysteine 285/cysteine 299, cysteine 298/cysteine 310, cysteine 334/cysteine 375, cysteine 374/cysteine 383, cysteine 406/cysteine 452, and cysteine 451/cysteine 461. Asparagine 287 carries N-linked (GlcNAc...) asparagine glycosylation.

It belongs to the ALB/AFP/VDB family. In terms of assembly, associates with membrane-bound immunoglobulin on the surface of B-lymphocytes and with IgG Fc receptor on the membranes of T-lymphocytes. Interacts with LRP2; the interaction is required for renal uptake of GC in complex with 25-hydroxyvitamin D3.

The protein localises to the secreted. In terms of biological role, involved in vitamin D transport and storage, scavenging of extracellular G-actin, enhancement of the chemotactic activity of C5 alpha for neutrophils in inflammation and macrophage activation. This is Vitamin D-binding protein (GC) from Bos taurus (Bovine).